We begin with the raw amino-acid sequence, 447 residues long: ATP-dependent protease ATPase subunit HslU (447 aa).

Residues Ile-17 and 59–64 (GVGKTE) contribute to the ATP site. The tract at residues 136 to 160 (PPARGGFQGEPTAEEKPTEKKESAT) is disordered. Over residues 148–159 (AEEKPTEKKESA) the composition is skewed to basic and acidic residues. ATP is bound by residues Asp-260, Glu-325, and Arg-397.

It belongs to the ClpX chaperone family. HslU subfamily. In terms of assembly, a double ring-shaped homohexamer of HslV is capped on each side by a ring-shaped HslU homohexamer. The assembly of the HslU/HslV complex is dependent on binding of ATP.

It is found in the cytoplasm. Its function is as follows. ATPase subunit of a proteasome-like degradation complex; this subunit has chaperone activity. The binding of ATP and its subsequent hydrolysis by HslU are essential for unfolding of protein substrates subsequently hydrolyzed by HslV. HslU recognizes the N-terminal part of its protein substrates and unfolds these before they are guided to HslV for hydrolysis. The polypeptide is ATP-dependent protease ATPase subunit HslU (Coxiella burnetii (strain RSA 331 / Henzerling II)).